We begin with the raw amino-acid sequence, 258 residues long: 14-3-3-like protein 16R (258 aa).

The disordered stretch occupies residues 238–258 (DMQDDGTDEIKEAAPKPDNNE). Residues 245–258 (DEIKEAAPKPDNNE) show a composition bias toward basic and acidic residues.

It belongs to the 14-3-3 family.

The chain is 14-3-3-like protein 16R from Solanum tuberosum (Potato).